Reading from the N-terminus, the 284-residue chain is MKNNFSKYQGLGNDFIIFDARSNNLDHLFSKNKDNFIEHLCNRNFGIGADGIILILESNNKCFVRMKIYNSDGSEPEMCGNGIRCLIAFLNDNNEINELSEIPIETKAGLILTSIDCNENIKVNMGEPILSPLDIPTKLLMNSLKVPNGVITLKDQILNVYAASMGNPHMIVFVNDIEGIPFQEWGSFLEKHNTFPNDTNVHFVEIIDKSNIKVKVWERGCGPTLACGTGACACLVVTSKLGKTLNNANVYLPGGKLEVEWPNQSGPVFMQGPALKVFSGEIDI.

Substrate is bound by residues Asn13 and Asn70. Catalysis depends on Cys79, which acts as the Proton donor. Substrate is bound by residues 80–81 (GN), Asn167, Asn200, and 218–219 (ER). Cys227 functions as the Proton acceptor in the catalytic mechanism. A substrate-binding site is contributed by 228–229 (GT).

This sequence belongs to the diaminopimelate epimerase family. In terms of assembly, homodimer.

The protein resides in the cytoplasm. It catalyses the reaction (2S,6S)-2,6-diaminopimelate = meso-2,6-diaminopimelate. Its pathway is amino-acid biosynthesis; L-lysine biosynthesis via DAP pathway; DL-2,6-diaminopimelate from LL-2,6-diaminopimelate: step 1/1. Catalyzes the stereoinversion of LL-2,6-diaminopimelate (L,L-DAP) to meso-diaminopimelate (meso-DAP), a precursor of L-lysine and an essential component of the bacterial peptidoglycan. The sequence is that of Diaminopimelate epimerase from Prochlorococcus marinus (strain NATL1A).